A 158-amino-acid chain; its full sequence is C-type lectin BML-1 (158 aa).

A signal peptide spans 1–23; it reads MGHFTFTGLCLLAMFLSLRGAEC. Disulfide bonds link Cys-26-Cys-37, Cys-54-Cys-154, Cys-61-Cys-156, and Cys-129-Cys-146. The 123-residue stretch at 33-155 folds into the C-type lectin domain; the sequence is KNGLCYKVFS…CAALRPFLCQ (123 aa). Positions 119, 121, and 127 each coordinate Ca(2+). The short motif at 119-121 is the Galactose-binding element; that stretch reads QPD. An N-linked (GlcNAc...) asparagine glycan is attached at Asn-134. Asn-142 and Asp-143 together coordinate Ca(2+).

This sequence belongs to the true venom lectin family. In terms of assembly, homodimer; non-covalently linked. In terms of tissue distribution, expressed by the venom gland.

Its subcellular location is the secreted. Recombinant C-type lectin BML-1 is able to agglutinate erythrocytes. May be a calcium-dependent lectin. The sequence is that of C-type lectin BML-1 from Bungarus multicinctus (Many-banded krait).